Consider the following 157-residue polypeptide: Small ribosomal subunit protein uS7 (157 aa).

This sequence belongs to the universal ribosomal protein uS7 family. As to quaternary structure, part of the 30S ribosomal subunit. Contacts proteins S9 and S11.

One of the primary rRNA binding proteins, it binds directly to 16S rRNA where it nucleates assembly of the head domain of the 30S subunit. Is located at the subunit interface close to the decoding center, probably blocks exit of the E-site tRNA. The protein is Small ribosomal subunit protein uS7 of Roseiflexus sp. (strain RS-1).